A 391-amino-acid polypeptide reads, in one-letter code: 8-amino-7-oxononanoate synthase (391 aa).

Substrate is bound at residue Arg19. A pyridoxal 5'-phosphate-binding site is contributed by Gly106–Tyr107. His131 contributes to the substrate binding site. The pyridoxal 5'-phosphate site is built by Ser178, His206, and Thr234. Lys237 is modified (N6-(pyridoxal phosphate)lysine). Thr353 is a substrate binding site.

This sequence belongs to the class-II pyridoxal-phosphate-dependent aminotransferase family. BioF subfamily. As to quaternary structure, homodimer. Pyridoxal 5'-phosphate is required as a cofactor.

The catalysed reaction is 6-carboxyhexanoyl-[ACP] + L-alanine + H(+) = (8S)-8-amino-7-oxononanoate + holo-[ACP] + CO2. It functions in the pathway cofactor biosynthesis; biotin biosynthesis. In terms of biological role, catalyzes the decarboxylative condensation of pimeloyl-[acyl-carrier protein] and L-alanine to produce 8-amino-7-oxononanoate (AON), [acyl-carrier protein], and carbon dioxide. The polypeptide is 8-amino-7-oxononanoate synthase (Pelobacter propionicus (strain DSM 2379 / NBRC 103807 / OttBd1)).